The chain runs to 32 residues: Potassium channel toxin alpha-KTx 9.4 (32 aa).

3 cysteine pairs are disulfide-bonded: C3/C19, C6/C24, and C10/C26.

As to expression, expressed by the venom gland.

The protein localises to the secreted. Its function is as follows. Blocker of human voltage-gated potassium channel Kv1.1/KCNA1. In Hottentotta tamulus (Eastern Indian scorpion), this protein is Potassium channel toxin alpha-KTx 9.4.